We begin with the raw amino-acid sequence, 1487 residues long: Major viral transcription factor (1487 aa).

4 disordered regions span residues 41 to 295, 310 to 371, 409 to 442, and 803 to 1007; these read AAPD…LPPG, LAKT…EEAP, REPL…SRDG, and PPTR…HTPR. Residues 66–75 show a composition bias toward pro residues; that stretch reads VIPPPSPAPE. Low complexity-rich tracts occupy residues 165–193 and 201–213; these read PSSA…SSSS and DGAG…SSSS. Residues 214-224 show a composition bias toward acidic residues; sequence DDSDSDEGGEE. The segment covering 235 to 272 has biased composition (low complexity); it reads AAKTPSAAGSPGPSSGGDRPAAGAATPKSCRSGAASPG. Residues 273 to 285 show a composition bias toward pro residues; it reads APAPAPASAPAPS. Composition is skewed to low complexity over residues 807 to 829, 849 to 860, and 867 to 877; these read SQQP…AEGS, PSSHSQSPQHSQ, and ATTATCCRATQ. Positions 878–893 are enriched in polar residues; sequence TNARSRGQQHQPQKAR. A compositionally biased stretch (basic residues) spans 920–929; the sequence is HGRPRGKSGK. A compositionally biased stretch (low complexity) spans 938–951; sequence AAQAGASASFSSSA. A compositionally biased stretch (basic and acidic residues) spans 988–1007; that stretch reads GPDRRGGFRRVPRGDCHTPR.

Belongs to the herpesviridae ICP4 family. In terms of processing, a long stretch of serine residues may be a major site of phosphorylation.

It localises to the host nucleus. In terms of biological role, this IE protein is a multifunctional protein capable of migrating to the nucleus, binding to DNA, trans-activating other viral genes, and autoregulating its own synthesis. The chain is Major viral transcription factor (IE) from Equine herpesvirus 1 (strain Kentucky A) (EHV-1).